A 508-amino-acid chain; its full sequence is Glycerol kinase (508 aa).

An ADP-binding site is contributed by Thr17. Thr17, Thr18, and Ser19 together coordinate ATP. Thr17 provides a ligand contact to sn-glycerol 3-phosphate. Arg21 provides a ligand contact to ADP. Sn-glycerol 3-phosphate-binding residues include Arg87, Glu88, Tyr139, and Asp256. 5 residues coordinate glycerol: Arg87, Glu88, Tyr139, Asp256, and Gln257. 2 residues coordinate ADP: Thr278 and Gly322. ATP is bound by residues Thr278, Gly322, Gln326, and Ala423. 2 residues coordinate ADP: Ala423 and Asn427.

Belongs to the FGGY kinase family.

It catalyses the reaction glycerol + ATP = sn-glycerol 3-phosphate + ADP + H(+). It functions in the pathway polyol metabolism; glycerol degradation via glycerol kinase pathway; sn-glycerol 3-phosphate from glycerol: step 1/1. With respect to regulation, inhibited by fructose 1,6-bisphosphate (FBP). Functionally, key enzyme in the regulation of glycerol uptake and metabolism. Catalyzes the phosphorylation of glycerol to yield sn-glycerol 3-phosphate. The sequence is that of Glycerol kinase from Corynebacterium efficiens (strain DSM 44549 / YS-314 / AJ 12310 / JCM 11189 / NBRC 100395).